A 580-amino-acid chain; its full sequence is Thymidine kinase (580 aa).

Disordered regions lie at residues 1–60 and 133–157; these read MAEG…KSVK and VCGR…ASMG. Residues 137–149 are compositionally biased toward pro residues; that stretch reads PPLPPPNHPPPAT. 260–267 lines the ATP pocket; it reads GVMGVGKS. The active-site Proton acceptor is glutamate 287. Position 325 (glutamine 325) interacts with substrate. Arginine 415 is an ATP binding site. Position 421 (arginine 421) interacts with substrate.

It belongs to the herpesviridae thymidine kinase family. In terms of assembly, homodimer.

It catalyses the reaction thymidine + ATP = dTMP + ADP + H(+). Catalyzes the transfer of the gamma-phospho group of ATP to thymidine to generate dTMP in the salvage pathway of pyrimidine synthesis. The dTMP serves as a substrate for DNA polymerase during viral DNA replication. Allows the virus to be reactivated and to grow in non-proliferative cells lacking a high concentration of phosphorylated nucleic acid precursors. This Human herpesvirus 8 type P (isolate GK18) (HHV-8) protein is Thymidine kinase.